The sequence spans 622 residues: Mitochondrial Rho GTPase 2 (622 aa).

Residues 1-596 (MRRDVRILLL…ELHPTPFWLR (596 aa)) lie on the Cytoplasmic side of the membrane. One can recognise a Miro 1 domain in the interval 2–168 (RRDVRILLLG…FYYAQKAVLH (167 aa)). GTP contacts are provided by G16, K17, T18, and S19. T18 is a binding site for Mg(2+). D57 is a binding site for Mg(2+). Residue S59 participates in GTP binding. Residue K96 forms a Glycyl lysine isopeptide (Lys-Gly) (interchain with G-Cter in ubiquitin) linkage. Residues N118, K119, D121, A149, and K150 each contribute to the GTP site. Residue K119 forms a Glycyl lysine isopeptide (Lys-Gly) (interchain with G-Cter in ubiquitin) linkage. Residue K164 forms a Glycyl lysine isopeptide (Lys-Gly) (interchain with G-Cter in ubiquitin) linkage. EF-hand domains are found at residues 184–219 (ACAQ…CFGH) and 304–339 (RGYQ…FSVA). Positions 197, 199, 201, 208, 317, 319, 321, and 328 each coordinate Ca(2+). The region spanning 415–580 (RSVLMCKVLG…FTQLATMATF (166 aa)) is the Miro 2 domain. G427, G429, K430, S431, and A432 together coordinate GTP. S431 lines the Mg(2+) pocket. E475 is a binding site for Mg(2+). Positions 529, 531, and 560 each coordinate GTP. The chain crosses the membrane as a helical; Anchor for type IV membrane protein span at residues 597–619 (GVLVAVGTAVAAVLSFSLYRVLV). The Mitochondrial intermembrane portion of the chain corresponds to 620-622 (KSR).

It belongs to the mitochondrial Rho GTPase family. As to quaternary structure, homodimer. Interacts with the kinesin-binding proteins TRAK1/OIP106 and TRAK2/GRIF1, forming a link between mitochondria and the trafficking apparatus of the microtubules. Interacts with ARMCX3. Found in a complex with KIF5B, OGT, RHOT1 and TRAK1. Post-translationally, ubiquitinated by PRKN in a PINK1-dependent manner, leading to its degradation.

Its subcellular location is the mitochondrion outer membrane. The catalysed reaction is GTP + H2O = GDP + phosphate + H(+). It carries out the reaction ATP + H2O = ADP + phosphate + H(+). The enzyme catalyses UTP + H2O = UDP + phosphate + H(+). Functionally, atypical mitochondrial nucleoside-triphosphatase (NTPase) involved in mitochondrial trafficking. Probably involved in control of anterograde transport of mitochondria and their subcellular distribution. Can hydrolyze GTP, ATP and UTP. The sequence is that of Mitochondrial Rho GTPase 2 (Rhot2) from Rattus norvegicus (Rat).